Here is a 325-residue protein sequence, read N- to C-terminus: GMP reductase (325 aa).

The active-site Thioimidate intermediate is Cys173. 202–225 (IIADGGIRHHGDIAKSVRFGAAMV) contributes to the NADP(+) binding site.

Belongs to the IMPDH/GMPR family. GuaC type 2 subfamily.

It carries out the reaction IMP + NH4(+) + NADP(+) = GMP + NADPH + 2 H(+). In terms of biological role, catalyzes the irreversible NADPH-dependent deamination of GMP to IMP. It functions in the conversion of nucleobase, nucleoside and nucleotide derivatives of G to A nucleotides, and in maintaining the intracellular balance of A and G nucleotides. This chain is GMP reductase, found in Leptothrix cholodnii (strain ATCC 51168 / LMG 8142 / SP-6) (Leptothrix discophora (strain SP-6)).